Consider the following 301-residue polypeptide: Lysozyme-like protein 3 (301 aa).

The N-terminal stretch at Met1–Ser15 is a signal peptide. The Ch-type lysozyme domain occupies His64 to Thr282.

Belongs to the glycosyl hydrolase 25 family.

Functionally, plays a role in the stress response to heavy metals such as copper, probably in a kgb-1-dependent manner. The protein is Lysozyme-like protein 3 of Caenorhabditis elegans.